A 2813-amino-acid chain; its full sequence is von Willebrand factor (2813 aa).

The N-terminal stretch at 1–22 (MIPARFAGVLLALALILPGTLC) is a signal peptide. Residues 33 to 201 (ARCSLFGSDF…ALSSGEQWCE (169 aa)) form the VWFD 1 domain. 2 disulfides stabilise this stretch: cysteine 35–cysteine 162 and cysteine 57–cysteine 200. Asparagine 99, asparagine 156, and asparagine 211 each carry an N-linked (GlcNAc...) asparagine glycan. The TIL 1 domain maps to 295–348 (CPAGMEYRQCVSPCARTCQSLHINEMCQERCVDGCSCPEGQLLDEGLCVESTEC). A VWFD 2 domain is found at 386-560 (GECLVTGQSH…NAWKLHGDCQ (175 aa)). 3 disulfide bridges follow: cysteine 388–cysteine 524, cysteine 410–cysteine 559, and cysteine 432–cysteine 440. TIL domains are found at residues 652 to 707 (CPKG…KAQC) and 776 to 827 (CPAD…LERC). The N-linked (GlcNAc...) asparagine glycan is linked to asparagine 666. Residues 764–787 (SLSCRPPMVKLVCPADNLRAEGLE) are amino-terminal. Intrachain disulfides connect cysteine 767–cysteine 808, cysteine 776–cysteine 804, and cysteine 810–cysteine 821. The segment at 788–833 (CTKTCQNYDLECMSMGCVSGCLCPPGMVRHENRCVALERCPCFHQG) is E1. A CX region spans residues 826–853 (RCPCFHQGKEYAPGETVKIGCNTCVCQD). Asparagine 857 carries N-linked (GlcNAc...) asparagine glycosylation. Positions 865–1032 (ATCSTIGMAH…NSWKVSSQCA (168 aa)) constitute a VWFD 3 domain. 8 disulfides stabilise this stretch: cysteine 867–cysteine 996, cysteine 889–cysteine 1031, cysteine 898–cysteine 993, cysteine 914–cysteine 921, cysteine 1060–cysteine 1084, cysteine 1071–cysteine 1111, cysteine 1089–cysteine 1091, and cysteine 1126–cysteine 1130. Residues 1146 to 1196 (YNSCAPACQVTCQHPEPLACPVQCVEGCHAHCPPGKILDELLQTCVDPEDC) form the TIL 4 domain. A glycan (N-linked (GlcNAc...) asparagine; atypical) is linked at asparagine 1147. 3 disulfides stabilise this stretch: cysteine 1149–cysteine 1169, cysteine 1153–cysteine 1165, and cysteine 1196–cysteine 1199. The N-linked (GlcNAc...) asparagine glycan is linked to asparagine 1231. A disulfide bond links cysteine 1234 and cysteine 1237. 3 O-linked (GalNAc...) threonine glycosylation sites follow: threonine 1248, threonine 1255, and threonine 1256. The O-linked (GalNAc...) serine glycan is linked to serine 1263. An intrachain disulfide couples cysteine 1272 to cysteine 1458. The VWFA 1; binding site for platelet glycoprotein Ib domain maps to 1277 to 1453 (DLVFLLDGSS…DELEQQRDEI (177 aa)). Threonine 1468 and threonine 1477 each carry an O-linked (GalNAc...) threonine glycan. O-linked (GalNAc...) serine glycosylation occurs at serine 1486. An O-linked (GalNAc...) threonine glycan is attached at threonine 1487. In terms of domain architecture, VWFA 2 spans 1498–1665 (DVAFVLEGSD…TLPREAPDLV (168 aa)). Residue asparagine 1515 is glycosylated (N-linked (GlcNAc...) (complex) asparagine). N-linked (GlcNAc...) asparagine glycosylation occurs at asparagine 1574. A disulfide bond links cysteine 1669 and cysteine 1670. A glycan (O-linked (GalNAc...) threonine) is linked at threonine 1679. 7 disulfide bridges follow: cysteine 1686–cysteine 1872, cysteine 1879–cysteine 1904, cysteine 1899–cysteine 1940, cysteine 1927–cysteine 2088, cysteine 1950–cysteine 2085, cysteine 1972–cysteine 2123, and cysteine 1993–cysteine 2001. One can recognise a VWFA 3; main binding site for collagens type I and III domain in the interval 1691 to 1871 (DVILLLDGSS…TLGNSFLHKL (181 aa)). In terms of domain architecture, VWFD 4 spans 1948-2124 (CVCTGSSTRH…TVQRPGQTCQ (177 aa)). An E2 region spans residues 2216 to 2261 (CPRHCDGNVSSCGDHPSEGCFCPPDKVMLEGSCVPEEACTQCIGED). Residues asparagine 2223 and asparagine 2290 are each glycosylated (N-linked (GlcNAc...) asparagine). Residues 2255-2328 (TQCIGEDGVQ…CCPEYECVCD (74 aa)) form the VWFC 1 domain. O-linked (GalNAc...) threonine glycosylation occurs at threonine 2298. N-linked (GlcNAc...) asparagine glycans are attached at residues asparagine 2357 and asparagine 2400. The region spanning 2429-2495 (KVCVHRSTIY…HEGECCGRCL (67 aa)) is the VWFC 2 domain. Positions 2507 to 2509 (RGD) match the Cell attachment site motif. 2 N-linked (GlcNAc...) asparagine glycosylation sites follow: asparagine 2546 and asparagine 2585. The VWFC 3 domain occupies 2580–2645 (EACMLNGTVI…NTGECCGRCL (66 aa)). Disulfide bonds link cysteine 2724–cysteine 2774, cysteine 2739–cysteine 2788, cysteine 2750–cysteine 2804, and cysteine 2754–cysteine 2806. The region spanning 2724-2812 (CNDITARLQY…ECKCSPRKCS (89 aa)) is the CTCK domain. Asparagine 2790 is a glycosylation site (N-linked (GlcNAc...) asparagine).

As to quaternary structure, multimeric. Interacts with F8. In terms of processing, all cysteine residues are involved in intrachain or interchain disulfide bonds. Post-translationally, N- and O-glycosylated. As to expression, plasma.

Its subcellular location is the secreted. The protein resides in the extracellular space. The protein localises to the extracellular matrix. In terms of biological role, important in the maintenance of hemostasis, it promotes adhesion of platelets to the sites of vascular injury by forming a molecular bridge between sub-endothelial collagen matrix and platelet-surface receptor complex GPIb-IX-V. Also acts as a chaperone for coagulation factor VIII, delivering it to the site of injury, stabilizing its heterodimeric structure and protecting it from premature clearance from plasma. The polypeptide is von Willebrand factor (VWF) (Homo sapiens (Human)).